Here is a 324-residue protein sequence, read N- to C-terminus: tRNA U34 carboxymethyltransferase (324 aa).

Carboxy-S-adenosyl-L-methionine contacts are provided by residues Lys91, Trp105, Lys110, Gly130, 152–154 (DPS), 181–182 (IE), Met196, Tyr200, and Arg315.

The protein belongs to the class I-like SAM-binding methyltransferase superfamily. CmoB family. Homotetramer.

It catalyses the reaction carboxy-S-adenosyl-L-methionine + 5-hydroxyuridine(34) in tRNA = 5-carboxymethoxyuridine(34) in tRNA + S-adenosyl-L-homocysteine + H(+). In terms of biological role, catalyzes carboxymethyl transfer from carboxy-S-adenosyl-L-methionine (Cx-SAM) to 5-hydroxyuridine (ho5U) to form 5-carboxymethoxyuridine (cmo5U) at position 34 in tRNAs. This chain is tRNA U34 carboxymethyltransferase, found in Aliivibrio fischeri (strain ATCC 700601 / ES114) (Vibrio fischeri).